A 335-amino-acid polypeptide reads, in one-letter code: Ferrochelatase (335 aa).

Residues H192 and E291 each contribute to the Fe cation site.

It belongs to the ferrochelatase family.

Its subcellular location is the cytoplasm. The catalysed reaction is heme b + 2 H(+) = protoporphyrin IX + Fe(2+). It functions in the pathway porphyrin-containing compound metabolism; protoheme biosynthesis; protoheme from protoporphyrin-IX: step 1/1. Catalyzes the ferrous insertion into protoporphyrin IX. This is Ferrochelatase from Bdellovibrio bacteriovorus (strain ATCC 15356 / DSM 50701 / NCIMB 9529 / HD100).